The following is a 258-amino-acid chain: 4-oxalmesaconate hydratase (258 aa).

Zn(2+)-binding residues include histidine 28, aspartate 31, and histidine 141.

This sequence belongs to the MshB deacetylase family. Zn(2+) is required as a cofactor.

The catalysed reaction is 2-hydroxy-4-oxobutane-1,2,4-tricarboxylate = 4-carboxy-2-hydroxy-cis,cis-muconate + H2O. Catalyzes the conversion of oxalomesaconic acid enol (OMAenol) to 4-carboxy-4-hydroxy-2-oxoadipic acid (CHA). Mediates the third step of gallate degradation pathway. The sequence is that of 4-oxalmesaconate hydratase (galB) from Pseudomonas putida (strain ATCC 47054 / DSM 6125 / CFBP 8728 / NCIMB 11950 / KT2440).